The primary structure comprises 390 residues: Lipid-A-disaccharide synthase (390 aa).

Belongs to the LpxB family.

It carries out the reaction a lipid X + a UDP-2-N,3-O-bis[(3R)-3-hydroxyacyl]-alpha-D-glucosamine = a lipid A disaccharide + UDP + H(+). It participates in bacterial outer membrane biogenesis; LPS lipid A biosynthesis. In terms of biological role, condensation of UDP-2,3-diacylglucosamine and 2,3-diacylglucosamine-1-phosphate to form lipid A disaccharide, a precursor of lipid A, a phosphorylated glycolipid that anchors the lipopolysaccharide to the outer membrane of the cell. This Haemophilus influenzae (strain PittEE) protein is Lipid-A-disaccharide synthase.